The sequence spans 306 residues: Polyisoprenyl-teichoic acid--peptidoglycan teichoic acid transferase TagU (306 aa).

Residues 1–11 (MRAEKRKKKKK) are Cytoplasmic-facing. Residues 12–32 (ILYTIIALIGIFVLSTGSYAY) form a helical; Signal-anchor for type II membrane protein membrane-spanning segment. Topologically, residues 33–306 (YLWHKAASTV…TAELKESLNK (274 aa)) are extracellular.

The protein belongs to the LytR/CpsA/Psr (LCP) family.

It localises to the cell membrane. The protein operates within cell wall biogenesis. May catalyze the final step in cell wall teichoic acid biosynthesis, the transfer of the anionic cell wall polymers (APs) from their lipid-linked precursor to the cell wall peptidoglycan (PG). The sequence is that of Polyisoprenyl-teichoic acid--peptidoglycan teichoic acid transferase TagU from Bacillus licheniformis (strain ATCC 14580 / DSM 13 / JCM 2505 / CCUG 7422 / NBRC 12200 / NCIMB 9375 / NCTC 10341 / NRRL NRS-1264 / Gibson 46).